Consider the following 1291-residue polypeptide: Capping protein-inhibiting regulator of actin dynamics (1291 aa).

2 positions are modified to phosphoserine: Ser7 and Ser28. 6 disordered regions span residues 48–71 (KFGQRPSNAIPMKKAGSTDASSEE), 84–137 (QQDI…AGTI), 159–221 (HKLA…HEEK), 234–253 (KCKRQKAEAAEKRRQEEQRR), 267–663 (QELL…ASHA), and 701–1238 (LGLS…TSVT). Position 132 is a phosphoserine (Ser132). The span at 159 to 176 (HKLAVKPKNQRVSRKHRW) shows a compositional bias: basic residues. Polar residues predominate over residues 184–199 (EPGSFESQSSLDQNGQ). Positions 201–221 (GEDKHIWHGEEPEPLESHEEK) are enriched in basic and acidic residues. Over residues 270–291 (LEEEEEGEEEEEVKEEGEEGEE) the composition is skewed to acidic residues. 3 stretches are compositionally biased toward basic and acidic residues: residues 302–318 (PPEEGHQSGPEEQRCTE), 326–461 (DPAR…EDAK), and 470–483 (EAKRIEELKGKETP). The tract at residues 324–560 (ADDPARLEAE…DLDAHCGGVD (237 aa)) is required for interaction with actin-capping proteins. The residue at position 482 (Thr482) is a Phosphothreonine. Residues Ser493 and Ser510 each carry the phosphoserine modification. Composition is skewed to basic and acidic residues over residues 506–527 (ADQRSPLQRDLEKPGEREREDL) and 534–543 (EIAEEPRGEG). Positions 580 to 593 (EGTPAPEENEATAA) are enriched in low complexity. Over residues 594-612 (DIDRKVEELRWQEVDERQT) the composition is skewed to basic and acidic residues. Ser636 is subject to Phosphoserine. The residue at position 639 (Thr639) is a Phosphothreonine. Residues 749 to 778 (KNSEGDQRGDREPARAGDEPVPRARCDSRG) show a composition bias toward basic and acidic residues. Residue Ser867 is modified to Phosphoserine. The segment covering 875-888 (TESTTTLDSETTSD) has biased composition (low complexity). The segment covering 969–983 (QERKPALSPRKDSAE) has biased composition (basic and acidic residues). Residue Thr1033 is modified to Phosphothreonine. At Ser1037 the chain carries Phosphoserine. Over residues 1056 to 1070 (GKLDSEPSETAKESS) the composition is skewed to basic and acidic residues. A Phosphoserine modification is found at Ser1076. 3 stretches are compositionally biased toward basic and acidic residues: residues 1081 to 1098 (EELKGQKRDEKDVPEKKP), 1117 to 1141 (TGRKEKPVLQSRHSLDGSKVTEKVE), and 1157 to 1182 (GFREQQATREERKQAREAKQAEKLSK). Composition is skewed to polar residues over residues 1183-1197 (ETVSVSLQPGSSRAS) and 1229-1238 (KSNTLPTSVT).

As to quaternary structure, directly interacts with actin-capping proteins CAPZA1, CAPZA2 and CAPZB; this interaction decreases the binding of capping proteins to actin. As to expression, expressed in the small intestine (at protein level).

Its subcellular location is the cytoplasm. The protein localises to the cytosol. In terms of biological role, involved in epithelial cell integrity by acting on the dynamics of the actin cytoskeleton. Positively regulates the actin polymerization, by inhibiting the interaction of actin-capping proteins with actin. The chain is Capping protein-inhibiting regulator of actin dynamics from Mus musculus (Mouse).